A 183-amino-acid chain; its full sequence is Ribosome rescue factor SmrB (183 aa).

Residues 98–173 (LDLHGLTQLQ…GDAALLVLIE (76 aa)) form the Smr domain.

This sequence belongs to the SmrB family. Associates with collided ribosomes, but not with correctly translating polysomes.

In terms of biological role, acts as a ribosome collision sensor. Detects stalled/collided disomes (pairs of ribosomes where the leading ribosome is stalled and a second ribosome has collided with it) and endonucleolytically cleaves mRNA at the 5' boundary of the stalled ribosome. Stalled/collided disomes form a new interface (primarily via the 30S subunits) that binds SmrB. Cleaved mRNA becomes available for tmRNA ligation, leading to ribosomal subunit dissociation and rescue of stalled ribosomes. This chain is Ribosome rescue factor SmrB, found in Salmonella paratyphi A (strain ATCC 9150 / SARB42).